Reading from the N-terminus, the 177-residue chain is Large ribosomal subunit protein uL6 (177 aa).

It belongs to the universal ribosomal protein uL6 family. Part of the 50S ribosomal subunit.

In terms of biological role, this protein binds to the 23S rRNA, and is important in its secondary structure. It is located near the subunit interface in the base of the L7/L12 stalk, and near the tRNA binding site of the peptidyltransferase center. The chain is Large ribosomal subunit protein uL6 from Pseudoalteromonas atlantica (strain T6c / ATCC BAA-1087).